The sequence spans 407 residues: uncharacterized protein (407 aa).

Disordered stretches follow at residues 1–64 (MSRK…EPFD), 110–276 (GFGP…YPQF), and 314–341 (QSRP…HNNP). Residues 7–32 (KQSNPKRNYKNDNYFQENSYTMTNGF) are compositionally biased toward polar residues. Over residues 33–44 (TKDKDGKPVEFK) the composition is skewed to basic and acidic residues. Acidic residues predominate over residues 122 to 137 (DSDSEYSDECLTDECS). Composition is skewed to polar residues over residues 138-147 (DNYNKQSTDS) and 184-201 (NFDN…NSQP). The span at 209-231 (SKSSSKSSKSNKSNKSSKSNKSS) shows a compositional bias: low complexity. Over residues 232–246 (KSSKSKSNKHSKHKN) the composition is skewed to basic residues. Residues 247-258 (KSDSSSDSDEKT) are compositionally biased toward basic and acidic residues. Basic residues-rich tracts occupy residues 259–270 (HKHKDRRHRRGR) and 316–341 (RPRK…HNNP).

This is an uncharacterized protein from Acanthamoeba polyphaga mimivirus (APMV).